Consider the following 496-residue polypeptide: Probable glycine betaine transporter (496 aa).

12 helical membrane-spanning segments follow: residues 11 to 31 (TVLYISSAIALLFVLWGVFLP), 49 to 69 (FGWLYLLAVAIFIIFVFGIAI), 89 to 109 (FQWFAMLFGGGMGIGLVFWSV), 136 to 156 (VVFFHWGIHAWVNFAIAGLAL), 188 to 208 (AIDILAVFATIFGIATSLGLG), 219 to 239 (IWGIPAGPLTISLVIAVITVI), 260 to 280 (VWLSVAFMVFIFYFGGKVFIL), 306 to 326 (WVGGWTIFYWAWWIAWAPFVG), 341 to 361 (FVFAVTLLPVGFSFIWLAIYG), 396 to 416 (LYAITGPLAILLIVTCFVGAA), 441 to 461 (FWGIMQGAMTIVLIVVGGTAA), and 468 to 488 (ASIASAFPFMLIMLVMCYSIL).

Belongs to the BCCT transporter (TC 2.A.15) family.

It is found in the cell membrane. Functionally, probably acts in the uptake of glycine betaine. May function in the pathway that allows anaerobic methylotrophic growth of D.hafniense using glycine betaine. The protein is Probable glycine betaine transporter of Desulfitobacterium hafniense (strain Y51).